Consider the following 198-residue polypeptide: Probable minor pilin MMP0709 (198 aa).

Residues 1 to 5 constitute a propeptide that is removed on maturation; that stretch reads MSNRG. Positions 6-14 match the QXSXEXXXL motif; sequence QLSIEMVIL.

In terms of processing, the N-terminus is probably cleaved by the prepilin peptidase EppA, which recognizes the class III signal sequence.

The protein resides in the secreted. It is found in the cell surface. The protein localises to the fimbrium. The chain is Probable minor pilin MMP0709 from Methanococcus maripaludis (strain DSM 14266 / JCM 13030 / NBRC 101832 / S2 / LL).